A 234-amino-acid chain; its full sequence is NAD-dependent protein deacetylase (234 aa).

The region spanning 1–234 is the Deacetylase sirtuin-type domain; sequence MSDITAAQTT…AVDFFEGVQV (234 aa). A23, T27, R35, Q99, I101, D102, H117, T184, S185, N208, and V226 together coordinate NAD(+). Nicotinamide contacts are provided by I101 and D102. H117 functions as the Proton acceptor in the catalytic mechanism.

It belongs to the sirtuin family. Class U subfamily.

The protein localises to the cytoplasm. The catalysed reaction is N(6)-acetyl-L-lysyl-[protein] + NAD(+) + H2O = 2''-O-acetyl-ADP-D-ribose + nicotinamide + L-lysyl-[protein]. In terms of biological role, NAD-dependent protein deacetylase which modulates the activities of several enzymes which are inactive in their acetylated form. This is NAD-dependent protein deacetylase from Lactiplantibacillus plantarum (strain ATCC BAA-793 / NCIMB 8826 / WCFS1) (Lactobacillus plantarum).